A 1116-amino-acid chain; its full sequence is Phosphatidylinositol 4-kinase beta 2 (1116 aa).

A PIK helical domain is found at 1-143 (MQMAQFLSLV…SRIQEKCQIA (143 aa)). A run of 8 repeats spans residues 210–229 (ADDN…RDAL), 242–261 (CEKD…EDDE), 264–283 (SNSE…EEEE), 286–304 (NNSE…DEEE), 307–326 (SSSD…DEEE), 329–348 (ANSE…EDEE), 351–370 (ANTE…EDDK), and 378–396 (EEKD…DEKR). Positions 210 to 507 (ADDNKIFKRL…FRDRDRSVED (298 aa)) are 11 X 20 AA approximate repeats (PPC). The segment covering 394-404 (EKRNGNERNET) has biased composition (basic and acidic residues). The interval 394 to 417 (EKRNGNERNETDETVYTDETSGED) is disordered. The span at 405–415 (DETVYTDETSG) shows a compositional bias: acidic residues. The stretch at 418–436 (NGREGFFKKLFKEKFEDKP) is repeat 9. Phosphoserine occurs at positions 447 and 452. A run of 2 repeats spans residues 452–470 (SSEF…EDVK) and 488–507 (PGTE…SVED). Disordered stretches follow at residues 515–540 (KYKE…LPNN) and 794–813 (GEAP…SDAQ). In terms of domain architecture, PI3K/PI4K catalytic spans 830–1101 (EFWEGKRLRI…LISSSLDAWR (272 aa)). The interval 836 to 842 (RLRIRKD) is G-loop. A catalytic loop region spans residues 964 to 972 (QIKDRHNGN). The segment at 983-1007 (HIDFGFMLSNSPGGVNFESAPFKLT) is activation loop.

This sequence belongs to the PI3/PI4-kinase family. Type III PI4K subfamily.

Its subcellular location is the cell membrane. The protein localises to the golgi apparatus. The protein resides in the trans-Golgi network. It is found in the cytoplasmic vesicle membrane. It carries out the reaction a 1,2-diacyl-sn-glycero-3-phospho-(1D-myo-inositol) + ATP = a 1,2-diacyl-sn-glycero-3-phospho-(1D-myo-inositol 4-phosphate) + ADP + H(+). In terms of biological role, acts on phosphatidylinositol (PtdIns) in the first committed step in the production of the second messenger inositol-1,4,5-trisphosphate. Necessary for proper organization of the trans-Golgi network (TGN) and post-Golgi secretion in root hairs. Together with PI4KB1, required during polarized root hair expansion and pollen tube elongation. Functions redundantly with PI4KB1 upstream of the cold response phosphoinositide-dependent phospholipase C (PI-PLC) pathway. This chain is Phosphatidylinositol 4-kinase beta 2 (PI4KB2), found in Arabidopsis thaliana (Mouse-ear cress).